We begin with the raw amino-acid sequence, 446 residues long: Glutamate-1-semialdehyde 2,1-aminomutase (446 aa).

N6-(pyridoxal phosphate)lysine is present on Lys263.

Belongs to the class-III pyridoxal-phosphate-dependent aminotransferase family. HemL subfamily. Requires pyridoxal 5'-phosphate as cofactor.

The protein localises to the cytoplasm. It catalyses the reaction (S)-4-amino-5-oxopentanoate = 5-aminolevulinate. Its pathway is porphyrin-containing compound metabolism; protoporphyrin-IX biosynthesis; 5-aminolevulinate from L-glutamyl-tRNA(Glu): step 2/2. In Haloquadratum walsbyi (strain DSM 16790 / HBSQ001), this protein is Glutamate-1-semialdehyde 2,1-aminomutase.